The primary structure comprises 573 residues: Vacuolar protein 8 (573 aa).

Positions 1 to 36 (MAASAADRMGRQRMSGLSCSAPPRPTVVTNPGNKQD) are disordered. Positions 27–36 (VVTNPGNKQD) are enriched in polar residues. ARM repeat units follow at residues 60 to 97 (NRGE…FAEI), 98 to 137 (TEKD…NLAV), 139 to 178 (NENK…NLAT), 180 to 219 (EANK…NMTH), 221 to 260 (DQNR…NIAV), 264 to 303 (NRKK…NLAS), 305 to 344 (SDYQ…NISI), 346 to 386 (PLNE…NLAA), and 430 to 469 (DELK…NLSS).

This sequence belongs to the beta-catenin family.

The protein resides in the vacuole membrane. In terms of biological role, functions in both vacuole inheritance and protein targeting from the cytoplasm to vacuole. This is Vacuolar protein 8 (VAC8) from Yarrowia lipolytica (strain CLIB 122 / E 150) (Yeast).